Consider the following 305-residue polypeptide: Sulfate adenylyltransferase subunit 2 (305 aa).

This sequence belongs to the PAPS reductase family. CysD subfamily. Heterodimer composed of CysD, the smaller subunit, and CysN.

The enzyme catalyses sulfate + ATP + H(+) = adenosine 5'-phosphosulfate + diphosphate. Its pathway is sulfur metabolism; hydrogen sulfide biosynthesis; sulfite from sulfate: step 1/3. In terms of biological role, with CysN forms the ATP sulfurylase (ATPS) that catalyzes the adenylation of sulfate producing adenosine 5'-phosphosulfate (APS) and diphosphate, the first enzymatic step in sulfur assimilation pathway. APS synthesis involves the formation of a high-energy phosphoric-sulfuric acid anhydride bond driven by GTP hydrolysis by CysN coupled to ATP hydrolysis by CysD. This is Sulfate adenylyltransferase subunit 2 from Pseudomonas syringae pv. tomato (strain ATCC BAA-871 / DC3000).